The primary structure comprises 458 residues: Enolase (458 aa).

Position 177 (Gln-177) interacts with (2R)-2-phosphoglycerate. Glu-219 functions as the Proton donor in the catalytic mechanism. Mg(2+) is bound by residues Asp-256, Glu-310, and Asp-337. (2R)-2-phosphoglycerate-binding residues include Lys-362, Arg-391, Ser-392, and Lys-413. Lys-362 acts as the Proton acceptor in catalysis.

This sequence belongs to the enolase family. Mg(2+) is required as a cofactor.

The protein localises to the cytoplasm. Its subcellular location is the secreted. The protein resides in the cell surface. It catalyses the reaction (2R)-2-phosphoglycerate = phosphoenolpyruvate + H2O. It participates in carbohydrate degradation; glycolysis; pyruvate from D-glyceraldehyde 3-phosphate: step 4/5. Catalyzes the reversible conversion of 2-phosphoglycerate (2-PG) into phosphoenolpyruvate (PEP). It is essential for the degradation of carbohydrates via glycolysis. This Mycoplasma genitalium (strain ATCC 33530 / DSM 19775 / NCTC 10195 / G37) (Mycoplasmoides genitalium) protein is Enolase.